Here is a 51-residue protein sequence, read N- to C-terminus: Small, acid-soluble spore protein K (51 aa).

The tract at residues methionine 1–leucine 51 is disordered. Residues asparagine 21–arginine 43 show a composition bias toward basic and acidic residues.

This sequence belongs to the SspK family.

It is found in the spore core. The sequence is that of Small, acid-soluble spore protein K from Shouchella clausii (strain KSM-K16) (Alkalihalobacillus clausii).